Consider the following 359-residue polypeptide: Aromatic amino acid aminotransferase (359 aa).

Residues 1 to 42 (MSERKPPYLRSALDSIPPYRPGRKVVGPDGRSAKLSSNESPF) form a disordered region. An N6-(pyridoxal phosphate)lysine modification is found at Lys-223.

The protein belongs to the class-II pyridoxal-phosphate-dependent aminotransferase family. Homodimer. Requires pyridoxal 5'-phosphate as cofactor.

It carries out the reaction an aromatic L-alpha-amino acid + 2-oxoglutarate = an aromatic oxo-acid + L-glutamate. Its function is as follows. Aminotransferase that catalyzes the conversion of aromatic amino acids and 2-oxoglutarate into corresponding aromatic oxo acids and L-glutamate. The sequence is that of Aromatic amino acid aminotransferase from Thermobifida fusca (strain YX).